A 400-amino-acid chain; its full sequence is Casein kinase I homolog hhp2 (400 aa).

Residues 12–278 (YRIGRKIGSG…YLRKLFRDLL (267 aa)) form the Protein kinase domain. ATP is bound by residues 18-26 (IGSGSFGQI) and Lys41. Catalysis depends on Asp131, which acts as the Proton acceptor. The interval 330–352 (PNYSSIPLPAERNPKTPQSFSTN) is disordered.

Belongs to the protein kinase superfamily. CK1 Ser/Thr protein kinase family. Casein kinase I subfamily.

The protein resides in the nucleus. The catalysed reaction is L-seryl-[protein] + ATP = O-phospho-L-seryl-[protein] + ADP + H(+). The enzyme catalyses L-threonyl-[protein] + ATP = O-phospho-L-threonyl-[protein] + ADP + H(+). Involved in DNA repair. May regulate the activity of protein(s) involved in double strand break repair caused by gamma rays. The protein is Casein kinase I homolog hhp2 (hhp2) of Schizosaccharomyces pombe (strain 972 / ATCC 24843) (Fission yeast).